Reading from the N-terminus, the 338-residue chain is Glycerol-3-phosphate dehydrogenase [NAD(P)+] (338 aa).

NADPH contacts are provided by Ser-14, Tyr-15, His-35, and Lys-109. Residues Lys-109, Gly-138, and Thr-140 each contribute to the sn-glycerol 3-phosphate site. Ala-142 is an NADPH binding site. Positions 194, 247, 257, 258, and 259 each coordinate sn-glycerol 3-phosphate. The Proton acceptor role is filled by Lys-194. Arg-258 is a binding site for NADPH. Positions 282 and 284 each coordinate NADPH.

Belongs to the NAD-dependent glycerol-3-phosphate dehydrogenase family.

It localises to the cytoplasm. It catalyses the reaction sn-glycerol 3-phosphate + NAD(+) = dihydroxyacetone phosphate + NADH + H(+). The enzyme catalyses sn-glycerol 3-phosphate + NADP(+) = dihydroxyacetone phosphate + NADPH + H(+). It functions in the pathway membrane lipid metabolism; glycerophospholipid metabolism. Catalyzes the reduction of the glycolytic intermediate dihydroxyacetone phosphate (DHAP) to sn-glycerol 3-phosphate (G3P), the key precursor for phospholipid synthesis. This is Glycerol-3-phosphate dehydrogenase [NAD(P)+] from Shewanella oneidensis (strain ATCC 700550 / JCM 31522 / CIP 106686 / LMG 19005 / NCIMB 14063 / MR-1).